Consider the following 386-residue polypeptide: Cobalt-precorrin-5B C(1)-methyltransferase (386 aa).

It belongs to the CbiD family.

The catalysed reaction is Co-precorrin-5B + S-adenosyl-L-methionine = Co-precorrin-6A + S-adenosyl-L-homocysteine. Its pathway is cofactor biosynthesis; adenosylcobalamin biosynthesis; cob(II)yrinate a,c-diamide from sirohydrochlorin (anaerobic route): step 6/10. Catalyzes the methylation of C-1 in cobalt-precorrin-5B to form cobalt-precorrin-6A. The chain is Cobalt-precorrin-5B C(1)-methyltransferase from Prochlorococcus marinus (strain MIT 9303).